Here is a 220-residue protein sequence, read N- to C-terminus: Putative respiratory nitrate reductase subunit Rieske (220 aa).

A Rieske domain is found at 118 to 206; it reads KAPTLLVRHA…ITVSSEGYLI (89 aa). The [2Fe-2S] cluster site is built by Cys-151, His-153, Cys-168, and His-171. Cys-156 and Cys-170 are joined by a disulfide.

Probable multiprotein complex; a catalytic heterodimer of an alpha and beta chain is proposed to associate with additional subunits involved in membrane attachment and electron transfer. The cofactor is [2Fe-2S] cluster.

Its subcellular location is the cell membrane. The respiratory membrane-bound nitrate reductase enzyme complex plays a role in generation of metabolic energy by using nitrate as a terminal electron acceptor during anaerobic conditions. Proposed Rieske subunit involved in a protonmotive Q-cycle mechanism-based electron transfer electrons to the beta subunit. In Haloferax mediterranei (strain ATCC 33500 / DSM 1411 / JCM 8866 / NBRC 14739 / NCIMB 2177 / R-4) (Halobacterium mediterranei), this protein is Putative respiratory nitrate reductase subunit Rieske (narB).